A 316-amino-acid polypeptide reads, in one-letter code: tRNA-splicing endonuclease subunit Sen34 (316 aa).

Residues 120-184 form a disordered region; it reads QAAKKQKLEQ…PGPSNGVTPL (65 aa). Polar residues-rich tracts occupy residues 144 to 159 and 168 to 181; these read EATQGSETSDDGQPSA and LDSSSPQPGPSNGV. Catalysis depends on residues tyrosine 253, histidine 261, and lysine 292.

This sequence belongs to the tRNA-intron endonuclease family. TRNA splicing endonuclease is a heterotetramer composed of TSEN2, TSEN15, TSEN34/LENG5 and TSEN54. tRNA splicing endonuclease complex also contains proteins of the pre-mRNA 3'-end processing machinery such as CLP1, CPSF1, CPSF4 and CSTF2.

The protein resides in the nucleus. Its subcellular location is the nucleolus. The catalysed reaction is pretRNA = a 3'-half-tRNA molecule with a 5'-OH end + a 5'-half-tRNA molecule with a 2',3'-cyclic phosphate end + an intron with a 2',3'-cyclic phosphate and a 5'-hydroxyl terminus.. Functionally, constitutes one of the two catalytic subunit of the tRNA-splicing endonuclease complex, a complex responsible for identification and cleavage of the splice sites in pre-tRNA. It cleaves pre-tRNA at the 5'- and 3'-splice sites to release the intron. The products are an intron and two tRNA half-molecules bearing 2',3'-cyclic phosphate and 5'-OH termini. There are no conserved sequences at the splice sites, but the intron is invariably located at the same site in the gene, placing the splice sites an invariant distance from the constant structural features of the tRNA body. The tRNA splicing endonuclease is also involved in mRNA processing via its association with pre-mRNA 3'-end processing factors, establishing a link between pre-tRNA splicing and pre-mRNA 3'-end formation, suggesting that the endonuclease subunits function in multiple RNA-processing events. The chain is tRNA-splicing endonuclease subunit Sen34 (Tsen34) from Mus musculus (Mouse).